The primary structure comprises 193 residues: ATP-dependent protease subunit HslV (193 aa).

Residue Thr12 is part of the active site. Na(+) contacts are provided by Ala167, Cys170, and Thr173.

Belongs to the peptidase T1B family. HslV subfamily. In terms of assembly, a double ring-shaped homohexamer of HslV is capped on each side by a ring-shaped HslU homohexamer. The assembly of the HslU/HslV complex is dependent on binding of ATP.

The protein resides in the cytoplasm. It carries out the reaction ATP-dependent cleavage of peptide bonds with broad specificity.. With respect to regulation, allosterically activated by HslU binding. Functionally, protease subunit of a proteasome-like degradation complex believed to be a general protein degrading machinery. This is ATP-dependent protease subunit HslV from Bartonella quintana (strain Toulouse) (Rochalimaea quintana).